Reading from the N-terminus, the 457-residue chain is UDP-N-acetyl-alpha-D-muramoyl-L-alanyl-L-glutamate epimerase (457 aa).

It belongs to the MurL family.

It carries out the reaction UDP-N-acetyl-alpha-D-muramoyl-L-alanyl-L-glutamate + ATP + H2O = UDP-N-acetyl-alpha-D-muramoyl-L-alanyl-D-glutamate + AMP + diphosphate + H(+). It functions in the pathway cell wall biogenesis; peptidoglycan biosynthesis. Functionally, cell wall formation. Catalyzes epimerization of the terminal L-glutamate in UDP-N-acetyl-alpha-D-muramoyl-L-alanyl-L-glutamate. The polypeptide is UDP-N-acetyl-alpha-D-muramoyl-L-alanyl-L-glutamate epimerase (Salinispora tropica (strain ATCC BAA-916 / DSM 44818 / JCM 13857 / NBRC 105044 / CNB-440)).